The sequence spans 71 residues: Potassium voltage-gated channel subfamily E member 2 (71 aa).

Residues 7–27 (VILYLMVMIGMFSFIIVAILV) form a helical membrane-spanning segment. Over 28–71 (STVKSKRREHSNDPYHQYIVEDWQEKYKSQILHFEEAKATIHEN) the chain is Cytoplasmic.

Belongs to the potassium channel KCNE family. Interacts with KCNB1. Associates with KCNH2/ERG1. May associate with KCNQ2 and KCNQ3. Associates with HCN1 and probably HCN2. Heteromultimer with KCNC2. Interacts with KCNC2. Interacts with KCNQ1; forms a heterooligomer complex that targets to the membrane raft and leading to currents with an apparently instantaneous activation, a rapid deactivation process and a linear current-voltage relationship and decreases the amplitude of the outward current. As to expression, detected in heart; expression is highest in the SA node and the right atrium, and barely detectable in the ventricle.

The protein localises to the cell membrane. The protein resides in the apical cell membrane. Functionally, ancillary protein that functions as a regulatory subunit of the voltage-gated potassium (Kv) channel complex composed of pore-forming and potassium-conducting alpha subunits and of regulatory beta subunits. KCNE2 beta subunit modulates the gating kinetics and enhances stability of the channel complex. Alters the gating of the delayed rectifier Kv channel containing KCNB1 alpha subunit. Associates with KCNH2/HERG alpha subunit Kv channel to form the rapidly activating component of the delayed rectifying potassium current (IKr) in heart. May associate with KCNQ2 and/or KCNQ3 alpha subunits to modulate the native M-type current. May associate with HCN1 and HCN2 channel subunits to increase potassium current. Forms a heterooligomer complex with KCNQ1/KVLQT1 alpha subunits which leads to currents with an apparently instantaneous activation, a rapid deactivation process and a linear current-voltage relationship and decreases the amplitude of the outward current. KCNQ1-KCNE2 channel associates with Na(+)-coupled myo-inositol symporter in the apical membrane of choroid plexus epithelium and regulates the myo-inositol gradient between blood and cerebrospinal fluid with an impact on neuron excitability. This Oryctolagus cuniculus (Rabbit) protein is Potassium voltage-gated channel subfamily E member 2 (KCNE2).